The following is a 450-amino-acid chain: tRNA-2-methylthio-N(6)-dimethylallyladenosine synthase (450 aa).

One can recognise an MTTase N-terminal domain in the interval 7–127 (KRLYIKTYGC…LPELIARAHR (121 aa)). Cys-16, Cys-52, Cys-90, Cys-165, Cys-169, and Cys-172 together coordinate [4Fe-4S] cluster. A Radical SAM core domain is found at 151 to 378 (QVSGVSAFLT…NQLLDEQQKA (228 aa)). In terms of domain architecture, TRAM spans 381–443 (ILQVGKTMPV…KMSLGGVLET (63 aa)).

Belongs to the methylthiotransferase family. MiaB subfamily. As to quaternary structure, monomer. [4Fe-4S] cluster is required as a cofactor.

It localises to the cytoplasm. The enzyme catalyses N(6)-dimethylallyladenosine(37) in tRNA + (sulfur carrier)-SH + AH2 + 2 S-adenosyl-L-methionine = 2-methylsulfanyl-N(6)-dimethylallyladenosine(37) in tRNA + (sulfur carrier)-H + 5'-deoxyadenosine + L-methionine + A + S-adenosyl-L-homocysteine + 2 H(+). In terms of biological role, catalyzes the methylthiolation of N6-(dimethylallyl)adenosine (i(6)A), leading to the formation of 2-methylthio-N6-(dimethylallyl)adenosine (ms(2)i(6)A) at position 37 in tRNAs that read codons beginning with uridine. The polypeptide is tRNA-2-methylthio-N(6)-dimethylallyladenosine synthase (Caulobacter sp. (strain K31)).